The primary structure comprises 573 residues: Excitatory amino acid transporter 2 (573 aa).

Residues 1 to 11 (MASTEGANNMP) show a composition bias toward polar residues. Residues 1–29 (MASTEGANNMPKQVEVRMHDSHLSSEEPK) are disordered. Topologically, residues 1-44 (MASTEGANNMPKQVEVRMHDSHLSSEEPKHRNLGMRMCDKLGKN) are cytoplasmic. Phosphoserine occurs at positions 3, 21, 24, and 25. Basic and acidic residues predominate over residues 14-29 (VEVRMHDSHLSSEEPK). C38 carries the S-palmitoyl cysteine lipid modification. The next 3 helical transmembrane spans lie at 45–64 (LLLSLTVFGVILGAVCGGLL), 88–108 (MLKMLILPLIISSLITGLSGL), and 121–142 (MVYYMSTTIIAAVLGVILVLAI). N-linked (GlcNAc...) asparagine glycosylation is found at N205 and N215. Transmembrane regions (helical) follow at residues 235–258 (FKDGMNVLGLIGFFIAFGIAMGKM), 268–295 (FFNILNEIVMKLVIMIMWYSPLGIACLI), and 317–338 (ITVIVGLIIHGGIFLPLIYFVV). Residues 344–374 (FSFFAGIFQAWITALGTASSAGTLPVTFRCL) constitute an intramembrane region (discontinuously helical). An L-aspartate-binding site is contributed by 361–363 (ASS). The helical transmembrane segment at 384–410 (VTRFVLPVGATINMDGTALYEAVAAIF) threads the bilayer. The Na(+) site is built by G392, T394, and N396. Residues T400, 441–445 (IPSAG), D474, and N481 each bind L-aspartate. Residues 424-457 (IVTVSLTATLASIGAASIPSAGLVTMLLILTAVG) constitute an intramembrane region (discontinuously helical). The helical transmembrane segment at 471-492 (WLLDRMRTSVNVVGDSFGAGIV) threads the bilayer. 2 residues coordinate Na(+): N481 and D485. Phosphoserine is present on residues S505, S520, S531, and S533. A Phosphotyrosine modification is found at Y538. Phosphoserine is present on residues S543, S559, and S563.

It belongs to the dicarboxylate/amino acid:cation symporter (DAACS) (TC 2.A.23) family. SLC1A2 subfamily. Homotrimer. Interacts with AJUBA. In terms of processing, glycosylated. Palmitoylation at Cys-38 is not required for correct subcellular localization, but is important for glutamate uptake activity. In terms of tissue distribution, localized in brain and is highly enriched in the Purkinje cell layer in cerebellum.

Its subcellular location is the cell membrane. It catalyses the reaction K(+)(in) + L-glutamate(out) + 3 Na(+)(out) + H(+)(out) = K(+)(out) + L-glutamate(in) + 3 Na(+)(in) + H(+)(in). It carries out the reaction D-aspartate(out) + K(+)(in) + 3 Na(+)(out) + H(+)(out) = D-aspartate(in) + K(+)(out) + 3 Na(+)(in) + H(+)(in). The enzyme catalyses K(+)(in) + L-aspartate(out) + 3 Na(+)(out) + H(+)(out) = K(+)(out) + L-aspartate(in) + 3 Na(+)(in) + H(+)(in). In terms of biological role, sodium-dependent, high-affinity amino acid transporter that mediates the uptake of L-glutamate and also L-aspartate and D-aspartate. Functions as a symporter that transports one amino acid molecule together with two or three Na(+) ions and one proton, in parallel with the counter-transport of one K(+) ion. Mediates Cl(-) flux that is not coupled to amino acid transport; this avoids the accumulation of negative charges due to aspartate and Na(+) symport. Essential for the rapid removal of released glutamate from the synaptic cleft, and for terminating the postsynaptic action of glutamate. The protein is Excitatory amino acid transporter 2 (Slc1a2) of Rattus norvegicus (Rat).